Consider the following 947-residue polypeptide: Receptor-like protein 56 (947 aa).

A signal peptide spans 1–27 (MEGKVFSGQKLILVMLLLGHLHGFSSC). Residues 28 to 899 (IEKERKALLE…EDDKEVAIDM (872 aa)) are Extracellular-facing. N-linked (GlcNAc...) asparagine glycosylation is found at asparagine 60, asparagine 75, and asparagine 98. LRR repeat units lie at residues 105-128 (FEEV…VEGY), 134-157 (LRNL…FLNA), 159-182 (TSLT…ELKN), 183-207 (LTNL…EFPY), 209-232 (KKLK…GLKN), 233-257 (LTNL…VFCE), 259-281 (KNLQ…CFGN), 282-305 (LNKL…SFSS), and 307-330 (ESLE…PLTN). N-linked (GlcNAc...) asparagine glycans are attached at residues asparagine 141, asparagine 148, and asparagine 182. Asparagine 232 carries N-linked (GlcNAc...) asparagine glycosylation. Residue asparagine 330 is glycosylated (N-linked (GlcNAc...) asparagine). Residues 332–356 (TKLKVFIFSSKDDMVQVKIESTWQP) form an LRR 10; degenerate repeat. LRR repeat units lie at residues 357-380 (LFQL…LMYQ), 381-404 (KNLH…LLEN), 405-427 (NPEL…PTSV), 428-450 (HNLQ…NFGR), 452-476 (LPNL…MGEM), 477-500 (YNIS…FVSS), 502-527 (FSLS…NFTS), 529-549 (IVLR…LLTL), 550-575 (VDLC…VFEY), 577-598 (NFLD…SLDN), 600-616 (LFLH…DTFL), 617-640 (GSIQ…VDTQ), 642-663 (ISFL…LCEF), 664-686 (SKMR…CFNN), 757-780 (LNSM…ELGD), 781-804 (LFKL…SFSK), 805-829 (LQDI…LTNL), and 831-854 (SLAI…QFNT). Residue asparagine 415 is glycosylated (N-linked (GlcNAc...) asparagine). N-linked (GlcNAc...) asparagine glycans are attached at residues asparagine 459, asparagine 478, asparagine 488, and asparagine 524. Asparagine 606 carries an N-linked (GlcNAc...) asparagine glycan. Residue asparagine 686 is glycosylated (N-linked (GlcNAc...) asparagine). 4 N-linked (GlcNAc...) asparagine glycosylation sites follow: asparagine 788, asparagine 828, asparagine 836, and asparagine 841. The chain crosses the membrane as a helical span at residues 900-920 (LVFYWSTAGTYVTALIGILVL). The Cytoplasmic segment spans residues 921–947 (MCVDCSWRRAWLRLVDAFIASAKSKLA).

This sequence belongs to the RLP family.

The protein resides in the cell membrane. This Arabidopsis thaliana (Mouse-ear cress) protein is Receptor-like protein 56.